Reading from the N-terminus, the 225-residue chain is pH-response regulator palI/RIM9 homolog 2 (225 aa).

Over 1–4 the chain is Cytoplasmic; sequence MLVK. The helical transmembrane segment at 5–25 threads the bilayer; it reads IVLVVLLTLALVFECFSTISV. At 26 to 87 the chain is on the extracellular side; it reads PITIGLYISE…PNHAKYALSN (62 aa). The helical transmembrane segment at 88–108 threads the bilayer; sequence LLLVHVLAFVCVTILWVFGML. The Cytoplasmic portion of the chain corresponds to 109–120; sequence TCFRCIKTSRRM. A helical transmembrane segment spans residues 121 to 141; the sequence is LIIAVLWSMLTFMVTLLGFLI. The Extracellular segment spans residues 142–153; it reads DILIFSSHVTWC. A helical transmembrane segment spans residues 154–174; sequence TWLTLASAFFTVLSGTVLCVM. Residues 175–225 are Cytoplasmic-facing; sequence RRNLTYDKFLESKPEKHGVYVPLCRLNDVEELEIPWCNTMNHQALTAPTPM.

Belongs to the palI/RIM9 family.

It localises to the cell membrane. Required for the proteolytic cleavage of the transcription factor RIM101 in response to alkaline ambient pH. The protein is pH-response regulator palI/RIM9 homolog 2 of Kluyveromyces lactis (strain ATCC 8585 / CBS 2359 / DSM 70799 / NBRC 1267 / NRRL Y-1140 / WM37) (Yeast).